The primary structure comprises 597 residues: MSAILSADDLNDFISPGVACIKPVESLPQKESQSENPYEVTKEDKVQPENLPPAQISLTDCLACSGCVTSAEAVLISLQSHTEVLNTLDSYPELPLGSTSYQRGTQKVGSADSDGRIFVASVSPQVRASLAATYGITEREAKYMIDQFLMGPHGLRAGGKHGNGFTWVVDTNVMREAVLALTADEVTSSLLSTGSGSLPKSPILSSACPGWICYAEKTHPFILPHLSRLKSPQALSGTFLKSVLSKALGVPPSQIWHLAIMPCFDKKLEASREELTDIAWASTFTQSQTTPVRDVDCVITTRELLTLATARGLSLPNLPLKPLPASCLTPFPDQALESFLFSKSSSGQTVESGTSGGYLHHVLQIFQARNPGSKIVTQRGRNADVVEYVLMSSGDEPLFRAARYYGFRNIQNLVRKLKPARVSRLPGAKPQAVSSSANRRQPMSRNAAPAGTGADYAYVEVMACPGGCTNGGGQIRIEDAREAVPNALKETSTETPVAAPKPTPHEQRAWLARVDEAYYSADSDSEGSVTTEPVSVLSRDNQIHEFLNYWSEKVDIPLSRLAYTSYREVESDVGKTKNAPNETARVVELAGKIGGGW.

[4Fe-4S] cluster is bound at residue Cys-20. The disordered stretch occupies residues 25 to 46 (ESLPQKESQSENPYEVTKEDKV). Residues Cys-61, Cys-64, Cys-67, Cys-208, and Cys-263 each contribute to the [4Fe-4S] cluster site. The tract at residues 424–449 (RLPGAKPQAVSSSANRRQPMSRNAAP) is disordered. Over residues 432–444 (AVSSSANRRQPMS) the composition is skewed to polar residues. Cys-464 and Cys-468 together coordinate [4Fe-4S] cluster.

This sequence belongs to the NARF family.

Its function is as follows. Component of the cytosolic Fe/S protein assembly machinery. Required for maturation of extramitochondrial Fe/S proteins. May play a role in the transfer of pre-assembled Fe/S clusters to target apoproteins. This Aspergillus fumigatus (strain ATCC MYA-4609 / CBS 101355 / FGSC A1100 / Af293) (Neosartorya fumigata) protein is Cytosolic Fe-S cluster assembly factor nar1 (nar1).